The sequence spans 98 residues: Putative protein adenylyltransferase MJ1217 (98 aa).

Positions 31–45 (GSYAREEQKETSDID) match the GSX(10)DXD motif motif. Mg(2+) is bound by residues aspartate 43, aspartate 45, and aspartate 75.

This sequence belongs to the MntA antitoxin family. As to quaternary structure, probably forms a complex with cognate toxin MJ1216. It depends on Mg(2+) as a cofactor.

The enzyme catalyses L-tyrosyl-[protein] + ATP = O-(5'-adenylyl)-L-tyrosyl-[protein] + diphosphate. It catalyses the reaction O-(5'-adenylyl)-L-tyrosyl-[protein] + ATP = O-[5'-(adenylyl-(5'-&gt;3')-adenylyl)]-L-tyrosyl-[protein] + diphosphate. Its function is as follows. Probable antitoxin component of a putative type VII toxin-antitoxin (TA) system. Neutralizes cognate toxic MJ1216 by di-AMPylation. This is Putative protein adenylyltransferase MJ1217 from Methanocaldococcus jannaschii (strain ATCC 43067 / DSM 2661 / JAL-1 / JCM 10045 / NBRC 100440) (Methanococcus jannaschii).